The chain runs to 112 residues: Large ribosomal subunit protein eL31 (112 aa).

This sequence belongs to the eukaryotic ribosomal protein eL31 family. In terms of assembly, component of the large ribosomal subunit. Mature ribosomes consist of a small (40S) and a large (60S) subunit. The 40S subunit contains about 32 different proteins and 1 molecule of RNA (18S). The 60S subunit contains 45 different proteins and 3 molecules of RNA (25S, 5.8S and 5S).

The protein resides in the cytoplasm. Its function is as follows. Component of the ribosome, a large ribonucleoprotein complex responsible for the synthesis of proteins in the cell. The small ribosomal subunit (SSU) binds messenger RNAs (mRNAs) and translates the encoded message by selecting cognate aminoacyl-transfer RNA (tRNA) molecules. The large subunit (LSU) contains the ribosomal catalytic site termed the peptidyl transferase center (PTC), which catalyzes the formation of peptide bonds, thereby polymerizing the amino acids delivered by tRNAs into a polypeptide chain. The nascent polypeptides leave the ribosome through a tunnel in the LSU and interact with protein factors that function in enzymatic processing, targeting, and the membrane insertion of nascent chains at the exit of the ribosomal tunnel. The polypeptide is Large ribosomal subunit protein eL31 (Candida albicans (strain SC5314 / ATCC MYA-2876) (Yeast)).